A 318-amino-acid polypeptide reads, in one-letter code: uncharacterized protein (318 aa).

It belongs to the asfivirus F317L family.

The protein localises to the virion. This is an uncharacterized protein from African swine fever virus (isolate Tick/Malawi/Lil 20-1/1983) (ASFV).